The following is an 873-amino-acid chain: DNA helicase/primase complex-associated protein (873 aa).

The disordered stretch occupies residues 394–422; that stretch reads PPLPRDDGDGENNVVEVSSSTGGAHPPSD.

The protein belongs to the herpesviridae HEPA family. In terms of assembly, associates with the primase and the helicase to form the helicase-primase complex. Interacts with the origin-binding protein. Interacts with the polymerase catalytic subunit.

It is found in the host nucleus. Its function is as follows. Component of the helicase/primase complex. Unwinds the DNA at the replication forks and generates single-stranded DNA for both leading and lagging strand synthesis. The primase synthesizes short RNA primers on the lagging strand that the polymerase presumably elongates using dNTPs. The primase-associated factor has no known catalytic activity in the complex and may serve to facilitate the formation of the replisome by directly interacting with the origin-binding protein and the polymerase. The protein is DNA helicase/primase complex-associated protein (UL102) of Homo sapiens (Human).